We begin with the raw amino-acid sequence, 310 residues long: Ribosomal RNA small subunit methyltransferase H (310 aa).

Residues G47–H49, D66, F93, D108, and Q115 each bind S-adenosyl-L-methionine.

It belongs to the methyltransferase superfamily. RsmH family.

It is found in the cytoplasm. It carries out the reaction cytidine(1402) in 16S rRNA + S-adenosyl-L-methionine = N(4)-methylcytidine(1402) in 16S rRNA + S-adenosyl-L-homocysteine + H(+). Functionally, specifically methylates the N4 position of cytidine in position 1402 (C1402) of 16S rRNA. This chain is Ribosomal RNA small subunit methyltransferase H, found in Prochlorococcus marinus (strain MIT 9303).